A 259-amino-acid chain; its full sequence is Steroidogenic acute regulatory-like protein 1 (259 aa).

The signal sequence occupies residues 1-20 (MTLLPFTCLILLYSLGSVMS). In terms of domain architecture, START spans 43 to 254 (YATALKTCGE…NRRHFQNLKA (212 aa)).

This is Steroidogenic acute regulatory-like protein 1 (strl-1) from Caenorhabditis elegans.